The following is a 480-amino-acid chain: Probable E3 ubiquitin protein ligase DRIPH (480 aa).

The RING-type zinc-finger motif lies at Cys-16–Asn-57. Disordered stretches follow at residues Gly-93–Asn-133, Arg-167–Lys-193, Thr-241–Glu-261, and Val-280–Val-356. A compositionally biased stretch (basic residues) spans Ser-103–Thr-112. Positions Ser-113–Asn-133 are enriched in low complexity. The span at Lys-175–Lys-193 shows a compositional bias: basic and acidic residues. Over residues Val-246 to Val-260 the composition is skewed to acidic residues. Residues Gly-298 to Ser-309 are compositionally biased toward polar residues.

The catalysed reaction is S-ubiquitinyl-[E2 ubiquitin-conjugating enzyme]-L-cysteine + [acceptor protein]-L-lysine = [E2 ubiquitin-conjugating enzyme]-L-cysteine + N(6)-ubiquitinyl-[acceptor protein]-L-lysine.. It functions in the pathway protein modification; protein ubiquitination. The protein is Probable E3 ubiquitin protein ligase DRIPH of Arabidopsis thaliana (Mouse-ear cress).